Here is a 239-residue protein sequence, read N- to C-terminus: 2',3'-cyclic-nucleotide 3'-phosphodiesterase (239 aa).

Residues H39 and H150 each act as proton donor/acceptor in the active site.

Belongs to the 2H phosphoesterase superfamily. CPD1 family.

Its subcellular location is the golgi apparatus. It carries out the reaction ADP-alpha-D-ribose 1'',2''-cyclic phosphate + H2O = ADP-alpha-D-ribose 1''-phosphate + H(+). It catalyses the reaction 2',3'-cyclophospho-AMP + H2O = adenosine 2'-phosphate + H(+). The enzyme catalyses 2',3'-cyclophospho-GMP + H2O = guanosine 2'-phosphate + H(+). The catalysed reaction is 2',3'-cyclophospho-UMP + H2O = uridine 2'-phosphate + H(+). It carries out the reaction 2',3'-cyclophospho-CMP + H2O = cytidine 2'-phosphate + H(+). It catalyses the reaction a nucleoside 2',3'-cyclic phosphate + H2O = a nucleoside 2'-phosphate + H(+). Involved in the metabolism of ADP-ribose 1',2'-cyclic phosphate which is produced as a consequence of tRNA splicing. The chain is 2',3'-cyclic-nucleotide 3'-phosphodiesterase from Saccharomyces cerevisiae (strain ATCC 204508 / S288c) (Baker's yeast).